The primary structure comprises 636 residues: Threonine--tRNA ligase (636 aa).

One can recognise a TGS domain in the interval 1-61; sequence MLKITLKDGS…NENCEVEILS (61 aa). Residues 244 to 534 form a catalytic region; that stretch reads EHRKLGKELD…LIEHYEGKFP (291 aa). Positions 335, 386, and 511 each coordinate Zn(2+).

This sequence belongs to the class-II aminoacyl-tRNA synthetase family. In terms of assembly, homodimer. It depends on Zn(2+) as a cofactor.

It is found in the cytoplasm. It carries out the reaction tRNA(Thr) + L-threonine + ATP = L-threonyl-tRNA(Thr) + AMP + diphosphate + H(+). Functionally, catalyzes the attachment of threonine to tRNA(Thr) in a two-step reaction: L-threonine is first activated by ATP to form Thr-AMP and then transferred to the acceptor end of tRNA(Thr). Also edits incorrectly charged L-seryl-tRNA(Thr). The sequence is that of Threonine--tRNA ligase from Natranaerobius thermophilus (strain ATCC BAA-1301 / DSM 18059 / JW/NM-WN-LF).